Consider the following 144-residue polypeptide: MADRLTQLQDAVNSLADQFCNAIGVLQQCGPPASFSNIQTAINKDQPANSTEEYAQLFAALIARTAKDIDVLIDSLPSEESTAALQAASLYKLEEENHEAATCLEDVVYRGDMLLEKIQSALADIAQSQLKTRSGTHSQSLPDS.

It belongs to the Mediator complex subunit 21 family. Component of the Mediator complex, which is composed of MED1, MED4, MED6, MED7, MED8, MED9, MED10, MED11, MED12, MED13, MED13L, MED14, MED15, MED16, MED17, MED18, MED19, MED20, MED21, MED22, MED23, MED24, MED25, MED26, MED27, MED29, MED30, MED31, CCNC, CDK8 and CDC2L6/CDK11. The MED12, MED13, CCNC and CDK8 subunits form a distinct module termed the CDK8 module. Mediator containing the CDK8 module is less active than Mediator lacking this module in supporting transcriptional activation. Individual preparations of the Mediator complex lacking one or more distinct subunits have been variously termed ARC, CRSP, DRIP, PC2, SMCC and TRAP. Interacts with PPARG. Interacts with THRA in a ligand-dependent fashion.

It localises to the nucleus. In terms of biological role, component of the Mediator complex, a coactivator involved in the regulated transcription of nearly all RNA polymerase II-dependent genes. Mediator functions as a bridge to convey information from gene-specific regulatory proteins to the basal RNA polymerase II transcription machinery. Mediator is recruited to promoters by direct interactions with regulatory proteins and serves as a scaffold for the assembly of a functional preinitiation complex with RNA polymerase II and the general transcription factors. The protein is Mediator of RNA polymerase II transcription subunit 21 (MED21) of Pongo abelii (Sumatran orangutan).